Here is a 359-residue protein sequence, read N- to C-terminus: Putative cyclin-F1-2 (359 aa).

The protein belongs to the cyclin family. Cyclin F subfamily.

This Oryza sativa subsp. japonica (Rice) protein is Putative cyclin-F1-2 (CYCF1-2).